We begin with the raw amino-acid sequence, 568 residues long: Chaperonin homolog Hsp-60, mitochondrial (568 aa).

This sequence belongs to the chaperonin (HSP60) family.

The protein localises to the mitochondrion matrix. Implicated in mitochondrial protein import and macromolecular assembly. May facilitate the correct folding of imported proteins. May also prevent misfolding and promote the refolding and proper assembly of unfolded polypeptides generated under stress conditions in the mitochondrial matrix. This is Chaperonin homolog Hsp-60, mitochondrial (hsp-60) from Caenorhabditis elegans.